A 381-amino-acid chain; its full sequence is Chaperone protein DnaJ 1 (381 aa).

One can recognise a J domain in the interval 4–68; that stretch reads DYYGLLGVSR…EKRRIVDLGG (65 aa). Residues 132-214 form a CR-type zinc finger; sequence GVTKQVTVDT…CMGDGRVRAR (83 aa). Zn(2+)-binding residues include Cys-145, Cys-148, Cys-162, Cys-165, Cys-188, Cys-191, Cys-202, and Cys-205. CXXCXGXG motif repeat units follow at residues 145–152, 162–169, 188–195, and 202–209; these read CDRCHGKG, CDTCGGRG, CPTCRGVG, and CHQCMGDG.

This sequence belongs to the DnaJ family. In terms of assembly, homodimer. Zn(2+) is required as a cofactor.

It localises to the cytoplasm. Its function is as follows. Participates actively in the response to hyperosmotic and heat shock by preventing the aggregation of stress-denatured proteins and by disaggregating proteins, also in an autonomous, DnaK-independent fashion. Unfolded proteins bind initially to DnaJ; upon interaction with the DnaJ-bound protein, DnaK hydrolyzes its bound ATP, resulting in the formation of a stable complex. GrpE releases ADP from DnaK; ATP binding to DnaK triggers the release of the substrate protein, thus completing the reaction cycle. Several rounds of ATP-dependent interactions between DnaJ, DnaK and GrpE are required for fully efficient folding. Also involved, together with DnaK and GrpE, in the DNA replication of plasmids through activation of initiation proteins. In Mycolicibacterium paratuberculosis (strain ATCC BAA-968 / K-10) (Mycobacterium paratuberculosis), this protein is Chaperone protein DnaJ 1.